We begin with the raw amino-acid sequence, 443 residues long: Xaa-Pro dipeptidase (443 aa).

Mn(2+) is bound by residues aspartate 246, aspartate 257, histidine 339, glutamate 384, and glutamate 423.

It belongs to the peptidase M24B family. Bacterial-type prolidase subfamily. Requires Mn(2+) as cofactor.

The enzyme catalyses Xaa-L-Pro dipeptide + H2O = an L-alpha-amino acid + L-proline. Functionally, splits dipeptides with a prolyl residue in the C-terminal position. The chain is Xaa-Pro dipeptidase from Klebsiella pneumoniae (strain 342).